The following is a 350-amino-acid chain: UPF0284 protein MJ1598 (350 aa).

The protein belongs to the UPF0284 family.

The protein is UPF0284 protein MJ1598 of Methanocaldococcus jannaschii (strain ATCC 43067 / DSM 2661 / JAL-1 / JCM 10045 / NBRC 100440) (Methanococcus jannaschii).